Here is a 92-residue protein sequence, read N- to C-terminus: Small ribosomal subunit protein uS19c (92 aa).

Belongs to the universal ribosomal protein uS19 family.

It is found in the plastid. It localises to the chloroplast. In terms of biological role, protein S19 forms a complex with S13 that binds strongly to the 16S ribosomal RNA. This Chlorokybus atmophyticus (Soil alga) protein is Small ribosomal subunit protein uS19c.